The primary structure comprises 591 residues: Aspartate--tRNA ligase (591 aa).

E176 is a binding site for L-aspartate. The interval 200-203 is aspartate; it reads QILK. L-aspartate is bound at residue R222. ATP-binding positions include 222–224 and Q231; that span reads RDE. L-aspartate is bound at residue H450. E484 serves as a coordination point for ATP. R491 is an L-aspartate binding site. 536-539 contacts ATP; the sequence is GLDR.

This sequence belongs to the class-II aminoacyl-tRNA synthetase family. Type 1 subfamily. Homodimer.

The protein resides in the cytoplasm. The catalysed reaction is tRNA(Asp) + L-aspartate + ATP = L-aspartyl-tRNA(Asp) + AMP + diphosphate. Functionally, catalyzes the attachment of L-aspartate to tRNA(Asp) in a two-step reaction: L-aspartate is first activated by ATP to form Asp-AMP and then transferred to the acceptor end of tRNA(Asp). This is Aspartate--tRNA ligase from Listeria monocytogenes serovar 1/2a (strain ATCC BAA-679 / EGD-e).